Consider the following 506-residue polypeptide: Lysine--tRNA ligase (506 aa).

E416 and E423 together coordinate Mg(2+).

The protein belongs to the class-II aminoacyl-tRNA synthetase family. As to quaternary structure, homodimer. The cofactor is Mg(2+).

The protein localises to the cytoplasm. The enzyme catalyses tRNA(Lys) + L-lysine + ATP = L-lysyl-tRNA(Lys) + AMP + diphosphate. This chain is Lysine--tRNA ligase, found in Bordetella parapertussis (strain 12822 / ATCC BAA-587 / NCTC 13253).